The following is a 228-amino-acid chain: 3,4-dihydroxy-2-butanone 4-phosphate synthase (228 aa).

D-ribulose 5-phosphate-binding positions include 37–38, D42, 150–154, and E174; these read RE and RRGHT. E38 contacts Mg(2+). H153 contributes to the Mg(2+) binding site.

The protein belongs to the DHBP synthase family. In terms of assembly, homodimer. Requires Mg(2+) as cofactor. It depends on Mn(2+) as a cofactor.

It catalyses the reaction D-ribulose 5-phosphate = (2S)-2-hydroxy-3-oxobutyl phosphate + formate + H(+). It functions in the pathway cofactor biosynthesis; riboflavin biosynthesis; 2-hydroxy-3-oxobutyl phosphate from D-ribulose 5-phosphate: step 1/1. Functionally, catalyzes the conversion of D-ribulose 5-phosphate to formate and 3,4-dihydroxy-2-butanone 4-phosphate. The sequence is that of 3,4-dihydroxy-2-butanone 4-phosphate synthase from Photobacterium profundum (strain SS9).